The following is a 179-amino-acid chain: Acireductone dioxygenase (179 aa).

The span at 1–12 (MVEAWYMDDSEE) shows a compositional bias: acidic residues. The segment at 1–21 (MVEAWYMDDSEEDQRRPHRLE) is disordered. 4 residues coordinate Fe(2+): His88, His90, Glu94, and His133. Residues His88, His90, Glu94, and His133 each contribute to the Ni(2+) site.

It belongs to the acireductone dioxygenase (ARD) family. As to quaternary structure, monomer. Interacts with MMP14. Requires Fe(2+) as cofactor. Ni(2+) serves as cofactor.

The protein localises to the cytoplasm. It is found in the nucleus. Its subcellular location is the cell membrane. The enzyme catalyses 1,2-dihydroxy-5-(methylsulfanyl)pent-1-en-3-one + O2 = 4-methylsulfanyl-2-oxobutanoate + formate + 2 H(+). It catalyses the reaction 1,2-dihydroxy-5-(methylsulfanyl)pent-1-en-3-one + O2 = 3-(methylsulfanyl)propanoate + CO + formate + 2 H(+). The protein operates within amino-acid biosynthesis; L-methionine biosynthesis via salvage pathway; L-methionine from S-methyl-5-thio-alpha-D-ribose 1-phosphate: step 5/6. Catalyzes 2 different reactions between oxygen and the acireductone 1,2-dihydroxy-3-keto-5-methylthiopentene (DHK-MTPene) depending upon the metal bound in the active site. Fe-containing acireductone dioxygenase (Fe-ARD) produces formate and 2-keto-4-methylthiobutyrate (KMTB), the alpha-ketoacid precursor of methionine in the methionine recycle pathway. Ni-containing acireductone dioxygenase (Ni-ARD) produces methylthiopropionate, carbon monoxide and formate, and does not lie on the methionine recycle pathway. Also down-regulates cell migration mediated by MMP14. The polypeptide is Acireductone dioxygenase (Monodelphis domestica (Gray short-tailed opossum)).